We begin with the raw amino-acid sequence, 195 residues long: Imidazoleglycerol-phosphate dehydratase (195 aa).

The protein belongs to the imidazoleglycerol-phosphate dehydratase family.

The protein resides in the cytoplasm. It catalyses the reaction D-erythro-1-(imidazol-4-yl)glycerol 3-phosphate = 3-(imidazol-4-yl)-2-oxopropyl phosphate + H2O. It functions in the pathway amino-acid biosynthesis; L-histidine biosynthesis; L-histidine from 5-phospho-alpha-D-ribose 1-diphosphate: step 6/9. The chain is Imidazoleglycerol-phosphate dehydratase from Campylobacter curvus (strain 525.92).